Here is an 89-residue protein sequence, read N- to C-terminus: Small ribosomal subunit protein bS16 (89 aa).

This sequence belongs to the bacterial ribosomal protein bS16 family.

This chain is Small ribosomal subunit protein bS16, found in Chloroflexus aurantiacus (strain ATCC 29364 / DSM 637 / Y-400-fl).